A 65-amino-acid chain; its full sequence is Large ribosomal subunit protein bL35 (65 aa).

The tract at residues 1-25 is disordered; it reads MPKMKSHRGAAKRFKKTGTGKLKRA.

This sequence belongs to the bacterial ribosomal protein bL35 family.

In Clostridium botulinum (strain Eklund 17B / Type B), this protein is Large ribosomal subunit protein bL35.